A 222-amino-acid polypeptide reads, in one-letter code: Thiamine-phosphate synthase (222 aa).

Residues 42-46 (QYRDK) and Asn-74 each bind 4-amino-2-methyl-5-(diphosphooxymethyl)pyrimidine. Mg(2+) is bound by residues Asp-75 and Asp-94. Thr-113 is a binding site for 4-amino-2-methyl-5-(diphosphooxymethyl)pyrimidine. 140-142 (SAT) is a 2-[(2R,5Z)-2-carboxy-4-methylthiazol-5(2H)-ylidene]ethyl phosphate binding site. Lys-143 contacts 4-amino-2-methyl-5-(diphosphooxymethyl)pyrimidine. 2-[(2R,5Z)-2-carboxy-4-methylthiazol-5(2H)-ylidene]ethyl phosphate is bound at residue Gly-169.

Belongs to the thiamine-phosphate synthase family. Requires Mg(2+) as cofactor.

The enzyme catalyses 2-[(2R,5Z)-2-carboxy-4-methylthiazol-5(2H)-ylidene]ethyl phosphate + 4-amino-2-methyl-5-(diphosphooxymethyl)pyrimidine + 2 H(+) = thiamine phosphate + CO2 + diphosphate. It catalyses the reaction 2-(2-carboxy-4-methylthiazol-5-yl)ethyl phosphate + 4-amino-2-methyl-5-(diphosphooxymethyl)pyrimidine + 2 H(+) = thiamine phosphate + CO2 + diphosphate. It carries out the reaction 4-methyl-5-(2-phosphooxyethyl)-thiazole + 4-amino-2-methyl-5-(diphosphooxymethyl)pyrimidine + H(+) = thiamine phosphate + diphosphate. It participates in cofactor biosynthesis; thiamine diphosphate biosynthesis; thiamine phosphate from 4-amino-2-methyl-5-diphosphomethylpyrimidine and 4-methyl-5-(2-phosphoethyl)-thiazole: step 1/1. Its function is as follows. Condenses 4-methyl-5-(beta-hydroxyethyl)thiazole monophosphate (THZ-P) and 2-methyl-4-amino-5-hydroxymethyl pyrimidine pyrophosphate (HMP-PP) to form thiamine monophosphate (TMP). The polypeptide is Thiamine-phosphate synthase (Marinobacter nauticus (strain ATCC 700491 / DSM 11845 / VT8) (Marinobacter aquaeolei)).